Reading from the N-terminus, the 544-residue chain is Chromatin assembly factor 1 subunit A (544 aa).

Residues 1–22 (MNSESVDSDVAASTSNKGNELC) are compositionally biased toward polar residues. Disordered stretches follow at residues 1–52 (MNSE…EADE), 67–117 (IYNG…REQE), and 138–160 (QEQQRRKEERDQKLREKEEAQRL). The span at 23 to 35 (SSSTDITSLSVSS) shows a compositional bias: low complexity. The span at 36-47 (PNESVIHSSHSA) shows a compositional bias: polar residues. The interval 56–170 (KLSYEGNRKK…RQEQILNKER (115 aa)) is interaction with DNA and pcn1/PCNA. Residues 74–117 (AGKEKKLQKQRAQEERIRQKEAERLKREKERQQREQEKKLREQE) show a composition bias toward basic and acidic residues. The stretch at 76 to 176 (KEKKLQKQRA…NKERQQLKLN (101 aa)) forms a coiled coil. Residues 172 to 179 (QLKLNNFF) carry the PCNA-interaction protein (PIP box) motif. An interaction with histones H3/H4 region spans residues 325–396 (SNVLLNPWLE…DKDSVNASNT (72 aa)). Residues 351-388 (DEEDDGEDLESEDEEVDNSDDIVEDGDNAFVDDEDDDK) are compositionally biased toward acidic residues. Residues 351 to 400 (DEEDDGEDLESEDEEVDNSDDIVEDGDNAFVDDEDDDKDSVNASNTHRSS) are disordered.

This sequence belongs to the RLF2 family. In terms of assembly, component of chromatin assembly factor 1 (CAF-1), composed of pcf1, pcf2 and pcf3. Interacts (via PIP motif) with pcn1/PCNA; the interaction is direct and occurs during S-phase. Interacts with swi6 at the G1/S-phase transition and early S-phase, but not in the G2 phase. The CAF-1 complex interacts with histone H3/H4 dimers.

Its subcellular location is the nucleus. Acts as a component of the histone chaperone complex chromatin assembly factor 1 (CAF-1), which assembles histone octamers onto DNA during replication and repair. CAF-1 performs the first step of the nucleosome assembly process, bringing newly synthesized histones H3 and H4 to replicating DNA; histones H2A/H2B can bind to this chromatin precursor subsequent to DNA replication to complete the histone octamer. Plays a role in the maintenance of heterochromatin. In Schizosaccharomyces pombe (strain 972 / ATCC 24843) (Fission yeast), this protein is Chromatin assembly factor 1 subunit A.